The primary structure comprises 118 residues: Holo-[acyl-carrier-protein] synthase (118 aa).

Positions 8 and 58 each coordinate Mg(2+).

This sequence belongs to the P-Pant transferase superfamily. AcpS family. The cofactor is Mg(2+).

The protein resides in the cytoplasm. The enzyme catalyses apo-[ACP] + CoA = holo-[ACP] + adenosine 3',5'-bisphosphate + H(+). Functionally, transfers the 4'-phosphopantetheine moiety from coenzyme A to a Ser of acyl-carrier-protein. The polypeptide is Holo-[acyl-carrier-protein] synthase (Listeria welshimeri serovar 6b (strain ATCC 35897 / DSM 20650 / CCUG 15529 / CIP 8149 / NCTC 11857 / SLCC 5334 / V8)).